The following is a 270-amino-acid chain: 3-methyl-2-oxobutanoate hydroxymethyltransferase (270 aa).

Mg(2+) is bound by residues D50 and D89. Residues 50–51 (DS), D89, and K118 each bind 3-methyl-2-oxobutanoate. Residue E120 coordinates Mg(2+). Residue E187 is the Proton acceptor of the active site.

This sequence belongs to the PanB family. In terms of assembly, homodecamer; pentamer of dimers. The cofactor is Mg(2+).

Its subcellular location is the cytoplasm. The enzyme catalyses 3-methyl-2-oxobutanoate + (6R)-5,10-methylene-5,6,7,8-tetrahydrofolate + H2O = 2-dehydropantoate + (6S)-5,6,7,8-tetrahydrofolate. Its pathway is cofactor biosynthesis; (R)-pantothenate biosynthesis; (R)-pantoate from 3-methyl-2-oxobutanoate: step 1/2. In terms of biological role, catalyzes the reversible reaction in which hydroxymethyl group from 5,10-methylenetetrahydrofolate is transferred onto alpha-ketoisovalerate to form ketopantoate. This chain is 3-methyl-2-oxobutanoate hydroxymethyltransferase, found in Helicobacter pylori (strain P12).